The sequence spans 314 residues: Probable phytol kinase 1, chloroplastic (314 aa).

The transit peptide at 1 to 62 directs the protein to the chloroplast; it reads MAAAARPVDV…GVGAAAAPAV (62 aa). The next 7 membrane-spanning stretches (helical) occupy residues 72–91, 111–131, 135–155, 181–201, 234–254, 266–286, and 294–314; these read AALR…YSLV, IVHV…SNST, FFAA…GLRL, YVIV…IGIV, IGSI…LFYF, LALG…CIPV, and ISVP…SSCC.

It belongs to the polyprenol kinase family.

It is found in the plastid. The protein resides in the chloroplast membrane. It catalyses the reaction phytol + CTP = phytyl phosphate + CDP + H(+). The protein operates within cofactor biosynthesis; tocopherol biosynthesis. In terms of biological role, involved in the activation and reutilization of phytol from chlorophyll degradation in plant metabolism, including tocopherol biosynthesis. Catalyzes the conversion of phytol to phytol monophosphate (PMP). This is Probable phytol kinase 1, chloroplastic from Oryza sativa subsp. japonica (Rice).